Consider the following 782-residue polypeptide: Homeotic protein proboscipedia (782 aa).

6 disordered regions span residues 1–23, 153–195, 251–336, 358–380, 439–493, and 547–586; these read MQEVCSSLDTTSMGTQIKSESPL, PQTP…VPEN, MKHK…GISS, SSVSLDEDIEESSPIKVKKKDDG, IATP…QQQP, and YYNYNDTNGTPYLNHQQQHHHHAQHHQQQQHHQNHVADFE. The short motif at 164-169 is the Antp-type hexapeptide element; the sequence is EYPWMK. Positions 198-257 form a DNA-binding region, homeobox; it reads PRRLRTAYTNTQLLELEKEFHFNKYLCRPRRIEIAASLDLTERQVKVWFQNRRMKHKRQT. Residues 308–321 are compositionally biased toward low complexity; sequence NNNTPSATNNNPSA. The span at 322–336 shows a compositional bias: polar residues; that stretch reads GNLTPNSSLETGISS. Residues 452–463 are compositionally biased toward gly residues; sequence NGSGGGPAGGYF. The span at 464–493 shows a compositional bias: low complexity; it reads PGYYPSPKQQQQVQQQQLHPQQQQLPQQQP. Over residues 563 to 580 the composition is skewed to basic residues; sequence QQHHHHAQHHQQQQHHQN.

The protein belongs to the Antp homeobox family. Proboscipedia subfamily.

It localises to the nucleus. Functionally, sequence-specific transcription factor which is part of a developmental regulatory system that provides cells with specific positional identities on the anterior-posterior axis. Controls development of mouthparts, and labial and maxillary palps. The polypeptide is Homeotic protein proboscipedia (pb) (Drosophila melanogaster (Fruit fly)).